A 432-amino-acid chain; its full sequence is Asparagine--tRNA ligase (432 aa).

It belongs to the class-II aminoacyl-tRNA synthetase family. Homodimer.

It is found in the cytoplasm. The enzyme catalyses tRNA(Asn) + L-asparagine + ATP = L-asparaginyl-tRNA(Asn) + AMP + diphosphate + H(+). The sequence is that of Asparagine--tRNA ligase from Lactobacillus gasseri (strain ATCC 33323 / DSM 20243 / BCRC 14619 / CIP 102991 / JCM 1131 / KCTC 3163 / NCIMB 11718 / NCTC 13722 / AM63).